Reading from the N-terminus, the 424-residue chain is Methylenetetrahydrofolate--tRNA-(uracil-5-)-methyltransferase TrmFO 1 (424 aa).

Residue 8–13 participates in FAD binding; that stretch reads GAGLSG.

This sequence belongs to the MnmG family. TrmFO subfamily. Requires FAD as cofactor.

Its subcellular location is the cytoplasm. The enzyme catalyses uridine(54) in tRNA + (6R)-5,10-methylene-5,6,7,8-tetrahydrofolate + NADH + H(+) = 5-methyluridine(54) in tRNA + (6S)-5,6,7,8-tetrahydrofolate + NAD(+). The catalysed reaction is uridine(54) in tRNA + (6R)-5,10-methylene-5,6,7,8-tetrahydrofolate + NADPH + H(+) = 5-methyluridine(54) in tRNA + (6S)-5,6,7,8-tetrahydrofolate + NADP(+). Functionally, catalyzes the folate-dependent formation of 5-methyl-uridine at position 54 (M-5-U54) in all tRNAs. This is Methylenetetrahydrofolate--tRNA-(uracil-5-)-methyltransferase TrmFO 1 from Mycoplasma mycoides subsp. mycoides SC (strain CCUG 32753 / NCTC 10114 / PG1).